The sequence spans 89 residues: Small ribosomal subunit protein uS15 (89 aa).

It belongs to the universal ribosomal protein uS15 family. In terms of assembly, part of the 30S ribosomal subunit. Forms a bridge to the 50S subunit in the 70S ribosome, contacting the 23S rRNA.

Its function is as follows. One of the primary rRNA binding proteins, it binds directly to 16S rRNA where it helps nucleate assembly of the platform of the 30S subunit by binding and bridging several RNA helices of the 16S rRNA. Forms an intersubunit bridge (bridge B4) with the 23S rRNA of the 50S subunit in the ribosome. The protein is Small ribosomal subunit protein uS15 of Klebsiella pneumoniae (strain 342).